Here is a 271-residue protein sequence, read N- to C-terminus: Putative phosphoenolpyruvate synthase regulatory protein (271 aa).

An ADP-binding site is contributed by 151–158; that stretch reads GVSRSGKT.

The protein belongs to the pyruvate, phosphate/water dikinase regulatory protein family. PSRP subfamily.

It carries out the reaction [pyruvate, water dikinase] + ADP = [pyruvate, water dikinase]-phosphate + AMP + H(+). The catalysed reaction is [pyruvate, water dikinase]-phosphate + phosphate + H(+) = [pyruvate, water dikinase] + diphosphate. Its function is as follows. Bifunctional serine/threonine kinase and phosphorylase involved in the regulation of the phosphoenolpyruvate synthase (PEPS) by catalyzing its phosphorylation/dephosphorylation. The chain is Putative phosphoenolpyruvate synthase regulatory protein from Paraburkholderia phytofirmans (strain DSM 17436 / LMG 22146 / PsJN) (Burkholderia phytofirmans).